The chain runs to 550 residues: Arginine--tRNA ligase (550 aa).

Positions 122–132 (GNPTGPLHLAH) match the 'HIGH' region motif.

It belongs to the class-I aminoacyl-tRNA synthetase family. Monomer.

It is found in the cytoplasm. It carries out the reaction tRNA(Arg) + L-arginine + ATP = L-arginyl-tRNA(Arg) + AMP + diphosphate. This is Arginine--tRNA ligase from Tropheryma whipplei (strain TW08/27) (Whipple's bacillus).